The chain runs to 362 residues: 3-dehydroquinate synthase (362 aa).

NAD(+) is bound by residues 71 to 76, 105 to 109, 129 to 130, Lys142, Lys151, and 169 to 172; these read DGEQYK, GVIGD, TT, and CLKT. Residues Glu184, His247, and His264 each contribute to the Zn(2+) site.

This sequence belongs to the sugar phosphate cyclases superfamily. Dehydroquinate synthase family. Co(2+) is required as a cofactor. The cofactor is Zn(2+). NAD(+) serves as cofactor.

It is found in the cytoplasm. The enzyme catalyses 7-phospho-2-dehydro-3-deoxy-D-arabino-heptonate = 3-dehydroquinate + phosphate. It participates in metabolic intermediate biosynthesis; chorismate biosynthesis; chorismate from D-erythrose 4-phosphate and phosphoenolpyruvate: step 2/7. Catalyzes the conversion of 3-deoxy-D-arabino-heptulosonate 7-phosphate (DAHP) to dehydroquinate (DHQ). This is 3-dehydroquinate synthase from Salmonella enteritidis PT4 (strain P125109).